A 642-amino-acid chain; its full sequence is Chaperone protein DnaK (642 aa).

A Phosphothreonine; by autocatalysis modification is found at threonine 198. Over residues 578–589 the composition is skewed to basic and acidic residues; the sequence is DDKEAIESRMQK. The tract at residues 578 to 642 is disordered; sequence DDKEAIESRM…FEEVKDGDKK (65 aa). Over residues 603-619 the composition is skewed to low complexity; the sequence is AEQAAQQGGDAGAQAED.

It belongs to the heat shock protein 70 family.

Its function is as follows. Acts as a chaperone. The protein is Chaperone protein DnaK of Hahella chejuensis (strain KCTC 2396).